The primary structure comprises 297 residues: Acetaldehyde dehydrogenase (297 aa).

15–18 serves as a coordination point for NAD(+); the sequence is SGSI. The active-site Acyl-thioester intermediate is cysteine 130. NAD(+)-binding positions include 162 to 170 and asparagine 272; that span reads SAGIATREN.

The protein belongs to the acetaldehyde dehydrogenase family.

It catalyses the reaction acetaldehyde + NAD(+) + CoA = acetyl-CoA + NADH + H(+). The protein is Acetaldehyde dehydrogenase (mhpF) of Burkholderia pseudomallei (strain K96243).